We begin with the raw amino-acid sequence, 123 residues long: Large ribosomal subunit protein bL19 (123 aa).

It belongs to the bacterial ribosomal protein bL19 family.

Its function is as follows. This protein is located at the 30S-50S ribosomal subunit interface and may play a role in the structure and function of the aminoacyl-tRNA binding site. This chain is Large ribosomal subunit protein bL19, found in Acinetobacter baylyi (strain ATCC 33305 / BD413 / ADP1).